We begin with the raw amino-acid sequence, 164 residues long: Pathogenesis-related protein PRB1-2 (164 aa).

A signal peptide spans 1-24 (MQTPKLAILLALAMAAAMVNLSQA). At Gln-25 the chain carries Pyrrolidone carboxylic acid. In terms of domain architecture, SCP spans 34 to 152 (PHNAARSAVG…NRGVFITCNY (119 aa)). Cystine bridges form between Cys-68–Cys-140, Cys-113–Cys-119, and Cys-135–Cys-150.

It belongs to the CRISP family.

Probably involved in the defense reaction of plants against pathogens. The sequence is that of Pathogenesis-related protein PRB1-2 from Hordeum vulgare (Barley).